The chain runs to 571 residues: RNA polymerase sigma factor SigA (571 aa).

Residues 321–391 form a sigma-70 factor domain-2 region; that stretch reads MVESNLRLVI…TRAIADQART (71 aa). The Interaction with polymerase core subunit RpoC signature appears at 345–348; the sequence is DLIQ. The sigma-70 factor domain-3 stretch occupies residues 400–476; it reads ETINKVLRGA…DTAVESPAEA (77 aa). Residues 489 to 542 form a sigma-70 factor domain-4 region; that stretch reads VLKTLTDRERFVLIHRFGLLDGRPKTLEEVGSAFNVTRERIRQIEAKALRKMRH. A DNA-binding region (H-T-H motif) is located at residues 515–534; that stretch reads LEEVGSAFNVTRERIRQIEA.

Belongs to the sigma-70 factor family. RpoD/SigA subfamily. In terms of assembly, interacts transiently with the RNA polymerase catalytic core.

Its subcellular location is the cytoplasm. In terms of biological role, sigma factors are initiation factors that promote the attachment of RNA polymerase to specific initiation sites and are then released. This sigma factor is the primary sigma factor during exponential growth. The sequence is that of RNA polymerase sigma factor SigA from Chlamydia trachomatis serovar D (strain ATCC VR-885 / DSM 19411 / UW-3/Cx).